A 401-amino-acid polypeptide reads, in one-letter code: Tryptophan synthase beta chain (401 aa).

Lys-88 is modified (N6-(pyridoxal phosphate)lysine).

It belongs to the TrpB family. Tetramer of two alpha and two beta chains. It depends on pyridoxal 5'-phosphate as a cofactor.

It carries out the reaction (1S,2R)-1-C-(indol-3-yl)glycerol 3-phosphate + L-serine = D-glyceraldehyde 3-phosphate + L-tryptophan + H2O. The protein operates within amino-acid biosynthesis; L-tryptophan biosynthesis; L-tryptophan from chorismate: step 5/5. Functionally, the beta subunit is responsible for the synthesis of L-tryptophan from indole and L-serine. This chain is Tryptophan synthase beta chain, found in Shewanella denitrificans (strain OS217 / ATCC BAA-1090 / DSM 15013).